The chain runs to 346 residues: Phosphoribosylformylglycinamidine cyclo-ligase (346 aa).

This sequence belongs to the AIR synthase family.

The protein localises to the cytoplasm. The enzyme catalyses 2-formamido-N(1)-(5-O-phospho-beta-D-ribosyl)acetamidine + ATP = 5-amino-1-(5-phospho-beta-D-ribosyl)imidazole + ADP + phosphate + H(+). It participates in purine metabolism; IMP biosynthesis via de novo pathway; 5-amino-1-(5-phospho-D-ribosyl)imidazole from N(2)-formyl-N(1)-(5-phospho-D-ribosyl)glycinamide: step 2/2. The sequence is that of Phosphoribosylformylglycinamidine cyclo-ligase from Vibrio campbellii (strain ATCC BAA-1116).